The primary structure comprises 72 residues: MMNRLLVFLMLGAAFMLVVSANDAYGDEPAFKDLNQGDESLGKRKSCCPCWLRGNCFWGQNCYPEGCSGPKV.

The first 21 residues, 1-21 (MMNRLLVFLMLGAAFMLVVSA), serve as a signal peptide directing secretion. A propeptide spanning residues 22–42 (NDAYGDEPAFKDLNQGDESLG) is cleaved from the precursor. Intrachain disulfides connect C47–C62, C48–C56, and C50–C67.

This sequence belongs to the sea anemone short toxin (type III) family.

It localises to the secreted. The protein resides in the nematocyst. Its function is as follows. Voltage-gated sodium channel (Nav) inhibitor. 1 uM completely inhibits insect voltage-gated sodium channel inactivation (DmNav1 from D.melanogaster). The polypeptide is Delta-actitoxin-Avd2b 1 (Anemonia viridis (Snakelocks anemone)).